Consider the following 325-residue polypeptide: MQHAQRPTWPHKDLLDVTQLTRAELFHLLDTAAQFHDINRRPVKKVPTLKGKSVVLFFAEPSTRTKTSFDVAGKRLSADTFSLAKSGSSLSKGESLKDTALTLQAMTPDIIVIRHSSSGAAQFLAERLDCSVVNAGDGWHAHPTQALLDCYSLRQVWGDTFEGRTLLILGDIAHSRVARSNVHLLSSLGVKVRLCAPRTLLPAGVHNWPVTIFNRLDDAVQGVDAVMCLRLQLERQQAGLLPDLREYAQRFCLSPRHLTMAAPSARVLHPGPMNRGLEISSVLADAPESLILDQVAAGVATRMAILFLLATRTGIEQTADNGGRA.

Carbamoyl phosphate-binding residues include R64 and T65. K92 is a binding site for L-aspartate. Residues R114, H142, and Q145 each contribute to the carbamoyl phosphate site. The L-aspartate site is built by R176 and R230. The carbamoyl phosphate site is built by G271 and P272.

It belongs to the aspartate/ornithine carbamoyltransferase superfamily. ATCase family. In terms of assembly, heterododecamer (2C3:3R2) of six catalytic PyrB chains organized as two trimers (C3), and six regulatory PyrI chains organized as three dimers (R2).

The catalysed reaction is carbamoyl phosphate + L-aspartate = N-carbamoyl-L-aspartate + phosphate + H(+). It participates in pyrimidine metabolism; UMP biosynthesis via de novo pathway; (S)-dihydroorotate from bicarbonate: step 2/3. Functionally, catalyzes the condensation of carbamoyl phosphate and aspartate to form carbamoyl aspartate and inorganic phosphate, the committed step in the de novo pyrimidine nucleotide biosynthesis pathway. The sequence is that of Aspartate carbamoyltransferase catalytic subunit from Nitratidesulfovibrio vulgaris (strain DSM 19637 / Miyazaki F) (Desulfovibrio vulgaris).